The chain runs to 159 residues: Insulin-like peptide 7 (159 aa).

The first 31 residues, M1–A31, serve as a signal peptide directing secretion. Intrachain disulfides connect C63/C136, C75/C150, and C135/C141. A propeptide spans T90–S121 (connecting peptide).

Belongs to the insulin family. Heterodimer of a B chain and an A chain linked by two disulfide bonds. Broadly expressed at a low level throughout the embryo, except the yolk. Expressed at a moderate level in the embryonic midgut. Larval expression is restricted to ten cells of the ventral nerve cord - in four pairs of centrally located cells in the most posterior abdominal segments and in one pair of dorsally located cells in the A1 or A2 segments.

It localises to the secreted. In terms of biological role, possible ligand of InR/insulin-like receptor. This Drosophila melanogaster (Fruit fly) protein is Insulin-like peptide 7.